Consider the following 374-residue polypeptide: Alanine racemase (374 aa).

Lysine 35 serves as the catalytic Proton acceptor; specific for D-alanine. Lysine 35 is subject to N6-(pyridoxal phosphate)lysine. A substrate-binding site is contributed by arginine 130. The active-site Proton acceptor; specific for L-alanine is the tyrosine 261. Residue methionine 309 participates in substrate binding.

The protein belongs to the alanine racemase family. The cofactor is pyridoxal 5'-phosphate.

It catalyses the reaction L-alanine = D-alanine. It participates in amino-acid biosynthesis; D-alanine biosynthesis; D-alanine from L-alanine: step 1/1. In terms of biological role, catalyzes the interconversion of L-alanine and D-alanine. May also act on other amino acids. In Albidiferax ferrireducens (strain ATCC BAA-621 / DSM 15236 / T118) (Rhodoferax ferrireducens), this protein is Alanine racemase (alr).